The following is a 317-amino-acid chain: MARKKISLIGGGQIGGVLAQLCALRELGDVVMFDIVEGLPQGKMLDIAEVGPVDGFDVCLKGTNSYADIAGSDVVIVTAGLPRKPGMSRDDLIEVNSKIMTQVAEGIKQYAPNSFVIVISNPLDAMVTLCQKITGFPYNRVIGQAGVLDSSRFAAFIAWELGVSVKDVVAVTLGGHGDDMVPLVRYTSVCGIPVMELLERKYKDKAKAKEVMEAMVKRTRGAGGEVVALLKTGSAFYSPASAAIAMTESILKDQKRVLPTCCFLQGEFGVNGYYVGVPAVLGENGVEQIIQFNLDAEEQAMMDKSVAAVKSLVDSLK.

NAD(+) contacts are provided by residues 10 to 15 (GGGQIG) and D34. Residues R83 and R89 each contribute to the substrate site. Residues N96 and 119–121 (ISN) each bind NAD(+). Residues N121 and R152 each contribute to the substrate site. Catalysis depends on H176, which acts as the Proton acceptor.

The protein belongs to the LDH/MDH superfamily. MDH type 3 family.

The catalysed reaction is (S)-malate + NAD(+) = oxaloacetate + NADH + H(+). Its function is as follows. Catalyzes the reversible oxidation of malate to oxaloacetate. The polypeptide is Malate dehydrogenase (Geobacter metallireducens (strain ATCC 53774 / DSM 7210 / GS-15)).